The following is a 98-amino-acid chain: Integration host factor subunit alpha (98 aa).

The interval phenylalanine 49–isoleucine 71 is disordered.

This sequence belongs to the bacterial histone-like protein family. As to quaternary structure, heterodimer of an alpha and a beta chain.

Its function is as follows. This protein is one of the two subunits of integration host factor, a specific DNA-binding protein that functions in genetic recombination as well as in transcriptional and translational control. In Pectobacterium atrosepticum (strain SCRI 1043 / ATCC BAA-672) (Erwinia carotovora subsp. atroseptica), this protein is Integration host factor subunit alpha.